Consider the following 281-residue polypeptide: Nucleotide-binding protein Daro_0070 (281 aa).

8-15 (GLSGSGKS) contributes to the ATP binding site. GTP is bound at residue 57 to 60 (DARS).

The protein belongs to the RapZ-like family.

Displays ATPase and GTPase activities. The chain is Nucleotide-binding protein Daro_0070 from Dechloromonas aromatica (strain RCB).